We begin with the raw amino-acid sequence, 520 residues long: Anthranilate synthase component 1 (520 aa).

Residues S40 and 291 to 293 each bind L-tryptophan; that span reads PYM. 328-329 is a chorismate binding site; it reads GT. E361 provides a ligand contact to Mg(2+). Residues Y449, R469, 483–485, and G485 each bind chorismate; that span reads GAG. A Mg(2+)-binding site is contributed by E498.

This sequence belongs to the anthranilate synthase component I family. Heterotetramer consisting of two non-identical subunits: a beta subunit (TrpG) and a large alpha subunit (TrpE). Mg(2+) is required as a cofactor.

It catalyses the reaction chorismate + L-glutamine = anthranilate + pyruvate + L-glutamate + H(+). Its pathway is amino-acid biosynthesis; L-tryptophan biosynthesis; L-tryptophan from chorismate: step 1/5. With respect to regulation, feedback inhibited by tryptophan. Its function is as follows. Part of a heterotetrameric complex that catalyzes the two-step biosynthesis of anthranilate, an intermediate in the biosynthesis of L-tryptophan. In the first step, the glutamine-binding beta subunit (TrpG) of anthranilate synthase (AS) provides the glutamine amidotransferase activity which generates ammonia as a substrate that, along with chorismate, is used in the second step, catalyzed by the large alpha subunit of AS (TrpE) to produce anthranilate. In the absence of TrpG, TrpE can synthesize anthranilate directly from chorismate and high concentrations of ammonia. In Buchnera aphidicola subsp. Pemphigus spyrothecae, this protein is Anthranilate synthase component 1 (trpE).